The sequence spans 363 residues: Chemerin-like receptor 1 (363 aa).

The Extracellular segment spans residues 1 to 39 (MDFEDYNSTYEDSYTDDFDTIVALEEFSPLEGRVVRIFL). Asparagine 7 is a glycosylation site (N-linked (GlcNAc...) asparagine). Residues 40 to 60 (VVVYSIICFLGILGNGLVIVI) form a helical membrane-spanning segment. The Cytoplasmic segment spans residues 61-71 (ATFKMKKTVNT). A helical membrane pass occupies residues 72-92 (VWFLNLAVADFLFNVFLPIHI). Residues 93–109 (AYAAMDYHWVFGTAMCK) lie on the Extracellular side of the membrane. Cysteine 108 and cysteine 185 are oxidised to a cystine. The chain crosses the membrane as a helical span at residues 110–130 (ISNFLLIHNMYTSVFLLTVIS). Residues 131-152 (FDRCISVLLPVWSQNHRSIRLA) are Cytoplasmic-facing. The chain crosses the membrane as a helical span at residues 153–173 (YMACVVIWVLAFFLSSPSLVF). At 174–220 (RDTAHLHGKISCFNNFSLSATSSSSWPTHPQMDTVGFGRQMVVTITR) the chain is on the extracellular side. Asparagine 188 is a glycosylation site (N-linked (GlcNAc...) asparagine). Residues 221–241 (FLCGFLVPVLIISACYFTIVY) form a helical membrane-spanning segment. Residues 242 to 256 (KLRRNRLAKTKKPFK) lie on the Cytoplasmic side of the membrane. A helical membrane pass occupies residues 257–277 (IIVTIIITFFLCWCPYHTLYL). The Extracellular segment spans residues 278–283 (LELHHR). A helical membrane pass occupies residues 284 to 304 (AMPGSVFSLGVPLATAIAIAN). The Cytoplasmic portion of the chain corresponds to 305 to 363 (SCMNPILYVFMGQDFKKFKVALFSRLVNALSEDTGHSSYPSHRSFTKMSSMNERETSML). Serine 335 carries the post-translational modification Phosphoserine. The tract at residues 337–363 (DTGHSSYPSHRSFTKMSSMNERETSML) is disordered. Threonine 338 carries the phosphothreonine modification. Residues 340–355 (HSSYPSHRSFTKMSSM) are compositionally biased toward polar residues. 3 positions are modified to phosphoserine: serine 345, serine 348, and serine 354.

It belongs to the chemokine-like receptor (CMKLR) family. Predominantly expressed in spleen and temperately in adipose tissue.

The protein localises to the cell membrane. Its function is as follows. Receptor for the chemoattractant adipokine chemerin/RARRES2 and for the omega-3 fatty acid derived molecule resolvin E1. Interaction with RARRES2 initiates activation of G proteins G(i)/G(o) and beta-arrestin pathways inducing cellular responses via second messenger pathways such as intracellular calcium mobilization, phosphorylation of MAP kinases MAPK1/MAPK3 (ERK1/2), TYRO3, MAPK14/P38MAPK and PI3K leading to multifunctional effects, like, reduction of immune responses, enhancing of adipogenesis and angionesis. Resolvin E1 down-regulates cytokine production in macrophages by reducing the activation of MAPK1/3 (ERK1/2) and NF-kappa-B. Positively regulates adipogenesis and adipocyte metabolism. The chain is Chemerin-like receptor 1 (CMLKR1) from Sus scrofa (Pig).